A 340-amino-acid chain; its full sequence is tRNA N6-adenosine threonylcarbamoyltransferase (340 aa).

Residues His-111 and His-115 each coordinate Fe cation. Substrate-binding positions include 133 to 137, Asp-166, Gly-179, Asp-183, and Asn-273; that span reads VVSGG. Asp-301 lines the Fe cation pocket.

Belongs to the KAE1 / TsaD family. It depends on Fe(2+) as a cofactor.

Its subcellular location is the cytoplasm. The enzyme catalyses L-threonylcarbamoyladenylate + adenosine(37) in tRNA = N(6)-L-threonylcarbamoyladenosine(37) in tRNA + AMP + H(+). Its function is as follows. Required for the formation of a threonylcarbamoyl group on adenosine at position 37 (t(6)A37) in tRNAs that read codons beginning with adenine. Is involved in the transfer of the threonylcarbamoyl moiety of threonylcarbamoyl-AMP (TC-AMP) to the N6 group of A37, together with TsaE and TsaB. TsaD likely plays a direct catalytic role in this reaction. This is tRNA N6-adenosine threonylcarbamoyltransferase from Pelobacter propionicus (strain DSM 2379 / NBRC 103807 / OttBd1).